The following is a 392-amino-acid chain: tRNA-specific 2-thiouridylase MnmA (392 aa).

ATP contacts are provided by residues 18 to 25 and Met44; that span reads GMSGGVDS. The interval 104-106 is interaction with target base in tRNA; the sequence is NPD. Cys109 functions as the Nucleophile in the catalytic mechanism. Cys109 and Cys208 are oxidised to a cystine. Residue Gly133 coordinates ATP. The tract at residues 158-160 is interaction with tRNA; that stretch reads KDQ. Cys208 functions as the Cysteine persulfide intermediate in the catalytic mechanism. The tract at residues 320–321 is interaction with tRNA; that stretch reads RY.

This sequence belongs to the MnmA/TRMU family.

The protein localises to the cytoplasm. The catalysed reaction is S-sulfanyl-L-cysteinyl-[protein] + uridine(34) in tRNA + AH2 + ATP = 2-thiouridine(34) in tRNA + L-cysteinyl-[protein] + A + AMP + diphosphate + H(+). Functionally, catalyzes the 2-thiolation of uridine at the wobble position (U34) of tRNA, leading to the formation of s(2)U34. This is tRNA-specific 2-thiouridylase MnmA from Marinobacter nauticus (strain ATCC 700491 / DSM 11845 / VT8) (Marinobacter aquaeolei).